A 1084-amino-acid chain; its full sequence is Myosin heavy chain, skeletal muscle (1084 aa).

Disordered stretches follow at residues 1-20 (SAET…KTKE), 270-292 (EIEA…SREL), and 298-317 (RLEE…KKRE). Residues 1 to 258 (SAETEKEMAN…SKIEDEQALM (258 aa)) are alpha-helical tailpiece (S2). The interval 259–1084 (TNLQRIEELE…DVHSKVISEE (826 aa)) is rodlike tail (S2 and LMM domains). Positions 273–292 (AERASRAKAEKQRSDLSREL) are enriched in basic and acidic residues. A coiled-coil region spans residues 455 to 1084 (QAFTQQIEGL…DVHSKVISEE (630 aa)).

In terms of assembly, muscle myosin is a hexameric protein that consists of 2 heavy chain subunits (MHC), 2 alkali light chain subunits (MLC) and 2 regulatory light chain subunits (MLC-2).

It is found in the cytoplasm. Its subcellular location is the myofibril. Its function is as follows. Muscle contraction. This is Myosin heavy chain, skeletal muscle from Oryctolagus cuniculus (Rabbit).